A 485-amino-acid polypeptide reads, in one-letter code: Glucagon receptor (485 aa).

Residues Met-1–Ser-26 form the signal peptide. Over Ala-27–Lys-137 the chain is Extracellular. 3 disulfide bridges follow: Cys-44–Cys-68, Cys-59–Cys-101, and Cys-82–Cys-122. N-linked (GlcNAc...) asparagine glycans are attached at residues Asn-47, Asn-60, Asn-75, and Asn-79. The helical transmembrane segment at Met-138–Val-162 threads the bilayer. Over Ile-163–Arg-174 the chain is Cytoplasmic. A helical membrane pass occupies residues Asn-175–Leu-199. Topologically, residues Lys-200–Arg-226 are extracellular. A disulfide bond links Cys-225 and Cys-295. The helical transmembrane segment at Val-227–Leu-250 threads the bilayer. The Cytoplasmic segment spans residues Tyr-251–Phe-264. Residues Phe-265 to Val-286 form a helical membrane-spanning segment. At Lys-287 to Phe-304 the chain is on the extracellular side. A helical transmembrane segment spans residues Trp-305–Ile-327. Residues His-328–Ser-351 are Cytoplasmic-facing. The segment at Ser-351–Thr-354 is important for allosteric inhibitor binding. Residues Thr-352 to Thr-370 form a helical membrane-spanning segment. The Extracellular portion of the chain corresponds to Asp-371–Lys-382. A helical membrane pass occupies residues Leu-383–Phe-403. Topologically, residues Leu-404–Thr-485 are cytoplasmic. The interval Met-455–Thr-485 is disordered. Residues Ser-456–Ser-475 are compositionally biased toward polar residues. 2 positions are modified to phosphoserine: Ser-460 and Ser-476.

The protein belongs to the G-protein coupled receptor 2 family. Post-translationally, ligand-binding promotes phosphorylation of serine residues in the C-terminal cytoplasmic domain. Phosphorylation is important for receptor endocytosis after ligand-binding.

It localises to the cell membrane. Functionally, G-protein coupled receptor for glucagon that plays a central role in the regulation of blood glucose levels and glucose homeostasis. Regulates the rate of hepatic glucose production by promoting glycogen hydrolysis and gluconeogenesis. Plays an important role in mediating the responses to fasting. Ligand binding causes a conformation change that triggers signaling via guanine nucleotide-binding proteins (G proteins) and modulates the activity of down-stream effectors, such as adenylate cyclase. Promotes activation of adenylate cyclase. Besides, plays a role in signaling via a phosphatidylinositol-calcium second messenger system. The protein is Glucagon receptor (Gcgr) of Rattus norvegicus (Rat).